Reading from the N-terminus, the 308-residue chain is Dual oxidase maturation factor 1 (308 aa).

Over 1-21 the chain is Extracellular; that stretch reads MQANIFPFYPQPRTPFKFDTK. The helical transmembrane segment at 22 to 42 threads the bilayer; sequence IIEIIIICIVTACTFIIILPG. Residues 43-49 lie on the Cytoplasmic side of the membrane; the sequence is IRGKSRS. Residues 50–70 traverse the membrane as a helical segment; sequence IWLLRILTSLFIGAVILAVNF. Topologically, residues 71-91 are extracellular; it reads TSDWEMGTITATTVYKSFSHS. Residues 92-112 traverse the membrane as a helical segment; sequence MLNASIGLWIGLKGLNITLIG. Residues 113–175 lie on the Cytoplasmic side of the membrane; sequence NPEYQLNETI…GLFQQYCIST (63 aa). A helical membrane pass occupies residues 176–198; sequence YYSSGIMWIAFCSWILYNVLFSM. Position 199 (proline 199) is a topological domain, extracellular. Residues 200–220 form a helical membrane-spanning segment; sequence VILYGIYMMFVTAICMLVSLI. Over 221-247 the chain is Cytoplasmic; sequence SFASVRKAPVCNIQFGNSILKTHFGVS. A helical membrane pass occupies residues 248 to 268; sequence YWLSLITGLLCLIISLVLLFL. Residues 269–308 are Extracellular-facing; the sequence is YKTQPKVLQLIFSYGEEEDLSNKSENEEEHSSVLSLNEIL. N-linked (GlcNAc...) asparagine glycosylation occurs at asparagine 290.

The protein belongs to the DUOXA family.

The protein localises to the membrane. In terms of biological role, possible role in maturation and transport from the endoplasmic reticulum to the plasma membrane of functional dual oxidase. This Xenopus laevis (African clawed frog) protein is Dual oxidase maturation factor 1 (duoxa1).